The following is a 99-amino-acid chain: Large ribosomal subunit protein uL23 (99 aa).

This sequence belongs to the universal ribosomal protein uL23 family. As to quaternary structure, part of the 50S ribosomal subunit. Contacts protein L29, and trigger factor when it is bound to the ribosome.

In terms of biological role, one of the early assembly proteins it binds 23S rRNA. One of the proteins that surrounds the polypeptide exit tunnel on the outside of the ribosome. Forms the main docking site for trigger factor binding to the ribosome. In Pseudomonas entomophila (strain L48), this protein is Large ribosomal subunit protein uL23.